Here is a 539-residue protein sequence, read N- to C-terminus: Chaperonin GroEL 1 (539 aa).

ATP is bound by residues 30-33, Lys-51, 87-91, Gly-415, 480-482, and Asp-496; these read TLGP, DGTTT, and NAA.

This sequence belongs to the chaperonin (HSP60) family. Forms a cylinder of 14 subunits composed of two heptameric rings stacked back-to-back. Interacts with the co-chaperonin GroES.

It is found in the cytoplasm. The catalysed reaction is ATP + H2O + a folded polypeptide = ADP + phosphate + an unfolded polypeptide.. Functionally, together with its co-chaperonin GroES, plays an essential role in assisting protein folding. The GroEL-GroES system forms a nano-cage that allows encapsulation of the non-native substrate proteins and provides a physical environment optimized to promote and accelerate protein folding. The sequence is that of Chaperonin GroEL 1 from Erythrobacter litoralis (strain HTCC2594).